Consider the following 440-residue polypeptide: Chromosome partition protein MukF (440 aa).

The tract at residues 208–236 (LSETSGTLRELQDTLEAAGDKLQANLLRI) is leucine-zipper.

Belongs to the MukF family. Interacts, and probably forms a ternary complex, with MukE and MukB via its C-terminal region. The complex formation is stimulated by calcium or magnesium. It is required for an interaction between MukE and MukB.

The protein localises to the cytoplasm. Its subcellular location is the nucleoid. Functionally, involved in chromosome condensation, segregation and cell cycle progression. May participate in facilitating chromosome segregation by condensation DNA from both sides of a centrally located replisome during cell division. Not required for mini-F plasmid partitioning. Probably acts via its interaction with MukB and MukE. Overexpression results in anucleate cells. It has a calcium binding activity. This chain is Chromosome partition protein MukF, found in Shigella boydii serotype 4 (strain Sb227).